The chain runs to 237 residues: NADH-ubiquinone oxidoreductase assembly factor N7BML (237 aa).

A compositionally biased stretch (basic and acidic residues) spans 214 to 223 (VEKERDDSGK). The interval 214-237 (VEKERDDSGKPAEWTPKAAVRRRG) is disordered.

The protein belongs to the complex I NDUFA12 subunit family.

It localises to the mitochondrion. Its function is as follows. Acts as an assembly factor of mitochondrial complex I. In Yarrowia lipolytica (strain CLIB 122 / E 150) (Yeast), this protein is NADH-ubiquinone oxidoreductase assembly factor N7BML.